The sequence spans 49 residues: Large ribosomal subunit protein bL33 (49 aa).

It belongs to the bacterial ribosomal protein bL33 family.

The sequence is that of Large ribosomal subunit protein bL33 from Pelotomaculum thermopropionicum (strain DSM 13744 / JCM 10971 / SI).